The chain runs to 101 residues: Small ribosomal subunit protein uS14A (101 aa).

This sequence belongs to the universal ribosomal protein uS14 family. In terms of assembly, part of the 30S ribosomal subunit. Contacts proteins S3 and S10.

In terms of biological role, binds 16S rRNA, required for the assembly of 30S particles and may also be responsible for determining the conformation of the 16S rRNA at the A site. This is Small ribosomal subunit protein uS14A from Salinispora tropica (strain ATCC BAA-916 / DSM 44818 / JCM 13857 / NBRC 105044 / CNB-440).